The following is a 274-amino-acid chain: uncharacterized protein (274 aa).

An ATP-binding site is contributed by 104-111 (GVFAIGKS).

This is an uncharacterized protein from Mycoplasma genitalium (strain ATCC 33530 / DSM 19775 / NCTC 10195 / G37) (Mycoplasmoides genitalium).